The sequence spans 423 residues: Hydroxymethylglutaryl-CoA synthase-like protein AKT4-1 (423 aa).

It belongs to the thiolase-like superfamily. HMG-CoA synthase family.

The protein operates within mycotoxin biosynthesis. Its function is as follows. Hydroxymethylglutaryl-CoA synthase-like protein; part of the gene clusters that mediate the biosynthesis of the host-selective toxins (HSTs) AK-toxins responsible for Japanese pear black spot disease by the Japanese pear pathotype. AK-toxins are esters of 9,10-epoxy 8-hydroxy 9-methyldecatrienoic acid (EDA). On cellular level, AK-toxins affect plasma membrane of susceptible cells and cause a sudden increase in loss of K(+) after a few minutes of toxin treatment. The acyl-CoA ligase AKT1, the hydrolase AKT2 and enoyl-CoA hydratase AKT3 are all involved in the biosynthesis of the AK-, AF- and ACT-toxin common 9,10-epoxy-8-hydroxy-9-methyl-decatrienoic acid (EDA) structural moiety. Part of the EDA biosynthesis occurs in the peroxisome since these 3 enzymes are localized in peroxisomes. The exact roles of the 3 enzymes, as well as of additional AK-toxin clusters enzymes, including AKT4, AKT6 and AKTS1, have still to be elucidated. The Cytochrome P450 monooxygenase AKT7 on the other side functions to limit production of EDA and AK-toxin, probably via the catalysis of a side reaction of EDA or its precursor. This Alternaria alternata (Alternaria rot fungus) protein is Hydroxymethylglutaryl-CoA synthase-like protein AKT4-1.